Reading from the N-terminus, the 153-residue chain is MSNQLNTMDIKEILKFLPHRYPFLLIDRVLDFTPGETLHAIKNVTINEPFFQGHFPVQPVMPGVLILEAMAQATGLLAFKTMSEEPSNDALYYFAGIDKARFKRVVEPGDQLHFEVQMIKERRGIGVFTGVAKVDGEVVCSAEIMCARREISK.

Residue His54 is part of the active site.

The protein belongs to the thioester dehydratase family. FabZ subfamily.

The protein localises to the cytoplasm. It catalyses the reaction a (3R)-hydroxyacyl-[ACP] = a (2E)-enoyl-[ACP] + H2O. Functionally, involved in unsaturated fatty acids biosynthesis. Catalyzes the dehydration of short chain beta-hydroxyacyl-ACPs and long chain saturated and unsaturated beta-hydroxyacyl-ACPs. This is 3-hydroxyacyl-[acyl-carrier-protein] dehydratase FabZ from Shewanella pealeana (strain ATCC 700345 / ANG-SQ1).